The sequence spans 445 residues: Rab GDP dissociation inhibitor beta (445 aa).

N-acetylmethionine is present on Met1. Lys57 carries the N6-succinyllysine modification. At Lys112 the chain carries N6-acetyllysine. Ser130 is subject to Phosphoserine. Lys269 is subject to N6-acetyllysine. Phosphoserine is present on Ser382.

This sequence belongs to the Rab GDI family. Interacts with RHOH. Interacts with the GDP-bound inactive forms of RAB3A, RAB3B, RAB3C, RAB5A, RAB5B, RAB5C, RAB8A, RAB8B, RAB10, RAB12, RAB35, and RAB43; binds RAB3D to a lesser extent. Interacts with DZIP1; this interaction negatively regulates the interaction of GDI2 with GDP-bound RAB8A.

It localises to the cytoplasm. Its subcellular location is the membrane. The protein localises to the golgi apparatus. The protein resides in the trans-Golgi network. In terms of biological role, GDP-dissociation inhibitor preventing the GDP to GTP exchange of most Rab proteins. By keeping these small GTPases in their inactive GDP-bound form regulates intracellular membrane trafficking. Negatively regulates protein transport to the cilium and ciliogenesis through the inhibition of RAB8A. The polypeptide is Rab GDP dissociation inhibitor beta (GDI2) (Canis lupus familiaris (Dog)).